A 213-amino-acid chain; its full sequence is 3,4-dihydroxy-2-butanone 4-phosphate synthase (213 aa).

Residues 37-38, aspartate 42, 150-154, and glutamate 174 contribute to the D-ribulose 5-phosphate site; these read RE and RPGHT. Residue glutamate 38 participates in Mg(2+) binding. Histidine 153 lines the Mg(2+) pocket.

Belongs to the DHBP synthase family. As to quaternary structure, homodimer. The cofactor is Mg(2+). Requires Mn(2+) as cofactor.

It catalyses the reaction D-ribulose 5-phosphate = (2S)-2-hydroxy-3-oxobutyl phosphate + formate + H(+). It functions in the pathway cofactor biosynthesis; riboflavin biosynthesis; 2-hydroxy-3-oxobutyl phosphate from D-ribulose 5-phosphate: step 1/1. Catalyzes the conversion of D-ribulose 5-phosphate to formate and 3,4-dihydroxy-2-butanone 4-phosphate. This Clostridium botulinum (strain Langeland / NCTC 10281 / Type F) protein is 3,4-dihydroxy-2-butanone 4-phosphate synthase.